Reading from the N-terminus, the 511-residue chain is Putative polyol transporter 1 (511 aa).

Helical transmembrane passes span 27 to 47 (FACAILASMTSIILGYDIGVM), 63 to 83 (VQLEILMGILNIYSLVGSGAA), 94 to 114 (YTIVLAGAFFFCGALLMGFAT), 124 to 144 (FVAGIGVGYAMMIAPVYTAEV), 151 to 171 (GFLTSFPEIFINIGILLGYVS), 186 to 206 (FMLGVGAVPSVFLAIGVLAMP), 284 to 304 (ILIACLGIHFAQQASGIDAVV), 324 to 344 (LATVAVGVVKTLFIVVGTCVV), 351 to 371 (ALLLTSMGGMFLSLTALGTSL), 384 to 404 (WAIGLAVTTVMTFVATFSIGA), 424 to 444 (GASLGVMLNRLMSGIIGMTFL), and 454 to 474 (GAFLLFAGVAAAAWVFFFTFL).

The protein belongs to the major facilitator superfamily. Sugar transporter (TC 2.A.1.1) family.

The protein localises to the membrane. Plasma membrane sugar-proton symporter. This Arabidopsis thaliana (Mouse-ear cress) protein is Putative polyol transporter 1 (PLT1).